The chain runs to 234 residues: Large ribosomal subunit protein uL1c (234 aa).

This sequence belongs to the universal ribosomal protein uL1 family. As to quaternary structure, part of the 50S ribosomal subunit.

The protein localises to the plastid. The protein resides in the chloroplast. Its function is as follows. Binds directly to 23S rRNA. Might be involved in E site tRNA release (Potential). The polypeptide is Large ribosomal subunit protein uL1c (rpl1) (Guillardia theta (Cryptophyte)).